Here is a 668-residue protein sequence, read N- to C-terminus: DNA ligase (668 aa).

NAD(+)-binding positions include 37–41 (DAVYD), 86–87 (SM), and Glu116. Catalysis depends on Lys118, which acts as the N6-AMP-lysine intermediate. Residues Arg139, Glu173, Lys288, and Lys312 each contribute to the NAD(+) site. Residues Cys406, Cys409, Cys424, and Cys429 each contribute to the Zn(2+) site. The BRCT domain occupies 590–668 (APDNFFKEKT…EQEAIAKIEK (79 aa)).

The protein belongs to the NAD-dependent DNA ligase family. LigA subfamily. The cofactor is Mg(2+). Mn(2+) is required as a cofactor.

The catalysed reaction is NAD(+) + (deoxyribonucleotide)n-3'-hydroxyl + 5'-phospho-(deoxyribonucleotide)m = (deoxyribonucleotide)n+m + AMP + beta-nicotinamide D-nucleotide.. Its function is as follows. DNA ligase that catalyzes the formation of phosphodiester linkages between 5'-phosphoryl and 3'-hydroxyl groups in double-stranded DNA using NAD as a coenzyme and as the energy source for the reaction. It is essential for DNA replication and repair of damaged DNA. This chain is DNA ligase, found in Lactobacillus johnsonii (strain CNCM I-12250 / La1 / NCC 533).